A 469-amino-acid polypeptide reads, in one-letter code: Pentatricopeptide repeat-containing protein At2g34370, mitochondrial (469 aa).

The N-terminal 65 residues, 1 to 65 (MVRLVCSRIL…QNRSFVQCRR (65 aa)), are a transit peptide targeting the mitochondrion. 4 PPR repeats span residues 142 to 172 (DARSYHTVIEMYSGCRSTDDALNVFNEMPKR), 173 to 207 (NSETWGTMIRCLAKNGEGERAIDMFTRFIEEGNKP), 208 to 238 (DKEIFKAVFFACVSIGDINEGLLHFESMYRD), and 244 to 274 (SMEDYVNVIEMLAACGHLDEALDFVERMTVE). The segment at 375 to 469 (DIGFVPATRV…NGVCSCKDYW (95 aa)) is type DYW motif.

The protein belongs to the PPR family. PCMP-H subfamily.

Its subcellular location is the mitochondrion. The polypeptide is Pentatricopeptide repeat-containing protein At2g34370, mitochondrial (PCMP-H25) (Arabidopsis thaliana (Mouse-ear cress)).